The primary structure comprises 272 residues: HMP-PP phosphatase (272 aa).

Aspartate 8 serves as the catalytic Nucleophile. Mg(2+) contacts are provided by aspartate 8, aspartate 10, and aspartate 212.

It belongs to the HAD-like hydrolase superfamily. Cof family. Mg(2+) serves as cofactor.

The enzyme catalyses 4-amino-2-methyl-5-(diphosphooxymethyl)pyrimidine + H2O = 4-amino-2-methyl-5-(phosphooxymethyl)pyrimidine + phosphate + H(+). In terms of biological role, catalyzes the hydrolysis of 4-amino-2-methyl-5-hydroxymethylpyrimidine pyrophosphate (HMP-PP) to 4-amino-2-methyl-5-hydroxymethylpyrimidine phosphate (HMP-P). This Escherichia coli (strain K12 / MC4100 / BW2952) protein is HMP-PP phosphatase.